The primary structure comprises 637 residues: Chaperone protein HtpG (637 aa).

An a; substrate-binding region spans residues 1–345 (MTAAQKETLG…SNDLPLNVSR (345 aa)). Residues 346-562 (EILQDNKVTQ…DNDMSSQMQK (217 aa)) are b. Positions 563–637 (LMESVGQAAP…LNKLMLELSK (75 aa)) are c.

This sequence belongs to the heat shock protein 90 family. Homodimer.

Its subcellular location is the cytoplasm. Its function is as follows. Molecular chaperone. Has ATPase activity. This Pseudoalteromonas translucida (strain TAC 125) protein is Chaperone protein HtpG.